We begin with the raw amino-acid sequence, 732 residues long: Nephrocystin-1 (732 aa).

Residues 3–105 (ARRQRDPLQA…LQGLAVTISR (103 aa)) adopt a coiled-coil conformation. At tyrosine 46 the chain carries Phosphotyrosine; by FAK2. 2 disordered regions span residues 103-153 (ISRE…KWST) and 205-244 (TYLE…KQRT). Composition is skewed to acidic residues over residues 115–145 (TEEE…EKEE) and 210–236 (YSEE…ETAD). A phosphoserine; by CK2 mark is found at serine 121, serine 123, and serine 126. Residues 127 to 150 (EDSGGEEEDAEEEEEEKEENESHK) are a coiled coil. The 61-residue stretch at 152–212 (STGEEYIAVG…PRTYLEPYSE (61 aa)) folds into the SH3 domain. Tyrosine 349 carries the post-translational modification Phosphotyrosine; by FAK2. Residue tyrosine 721 is modified to Phosphotyrosine; by SRC.

The protein belongs to the nephrocystin-1 family. As to quaternary structure, interacts with BCAR1, PTK2B/PYK2 and tensin. Interacts with INVS and NPHP3. Interacts with PACS1; the interaction is dependent on NPHP1 phosphorylation by CK2. Interacts with KIF7. Interacts with AHI1 and TNK2. Interacts with NPHP4 in a complex containing NPHP1, NPHP4 and RPGRIP1L. Interacts with IQCB1; the interaction likely requires additional interactors. Interacts with ANKS3. Interacts with SPATA7. Interacts with FLNA. Post-translationally, phosphorylation by CK2 is required for the interaction with PACS1 and the targeting to the base region of cilia. As to expression, widespread expression, with highest levels in pituitary gland, spinal cord, thyroid gland, testis, skeletal muscle, lymph node and trachea. Weakly expressed in heart, kidney and pancreas. Expressed in nasal epithelial cells (at protein level). Expressed in the renal collecting duct (at protein level).

Its subcellular location is the cell junction. The protein localises to the adherens junction. It localises to the cell projection. The protein resides in the cilium. It is found in the cytoplasm. Its subcellular location is the cytoskeleton. The protein localises to the cilium axoneme. It localises to the tight junction. Together with BCAR1 it may play a role in the control of epithelial cell polarity. Involved in the organization of apical junctions in kidney cells together with NPHP4 and RPGRIP1L/NPHP8. Does not seem to be strictly required for ciliogenesis. Seems to help to recruit PTK2B/PYK2 to cell matrix adhesions, thereby initiating phosphorylation of PTK2B/PYK2 and PTK2B/PYK2-dependent signaling. May play a role in the regulation of intraflagellar transport (IFT) during cilia assembly. Required for normal retina development. In connecting photoreceptor cilia influences the movement of some IFT proteins such as IFT88 and WDR19. Involved in spermatogenesis. This chain is Nephrocystin-1 (NPHP1), found in Homo sapiens (Human).